The primary structure comprises 293 residues: IIESVGEGVTDVAPGDHVLPVFTGECKECAHCKSAESNMCDLLRINTDRGVMIGDGKSRFSINGKPIYHFVGTSTFSEYTVMHVGCVAKINPQAPLDKVCVLSCGISTGLGASINVAKPPKGSTVAVFGLGAVGLAAAEGARIAGASRIIGVDLNPSRFEEARKFGCTEFVNPKDHNKPVQEVLAEMTNGGVDRSVECTGNINAMIQAFECVHDGWGVAVLVGVPHKDAEFKTHPMNFLNERTLKGTFFGNYKPRTDLPNVVELYMKKELEVEKFITHSVPFAEINKAFDLMA.

Cys26, Cys29, Cys32, Cys40, and Cys104 together coordinate Zn(2+). NAD(+) is bound by residues 129-134 (GLGAVG), Asp153, Arg158, Thr199, Val222, 222-224 (VGV), and Phe249.

Belongs to the zinc-containing alcohol dehydrogenase family. As to quaternary structure, homodimer. The cofactor is Zn(2+).

It localises to the cytoplasm. The catalysed reaction is a primary alcohol + NAD(+) = an aldehyde + NADH + H(+). It carries out the reaction a secondary alcohol + NAD(+) = a ketone + NADH + H(+). The sequence is that of Alcohol dehydrogenase 1 (ADH1) from Zea luxurians (Guatemalan teosinte).